The following is a 626-amino-acid chain: (+)-3-carene synthase 2, chloroplastic (626 aa).

The transit peptide at 1-45 (MSLISAVPLASSCVSKSLISSVREHTALRRAIATLQMSRRGKSVA) directs the protein to the chloroplast. Positions 377, 381, and 529 each coordinate Mg(2+). The DDXXD motif signature appears at 377-381 (DDMYD).

The protein belongs to the terpene synthase family. Tpsd subfamily. Mg(2+) serves as cofactor. Mn(2+) is required as a cofactor.

Its subcellular location is the plastid. The protein localises to the chloroplast. The enzyme catalyses (2E)-geranyl diphosphate = (+)-car-3-ene + diphosphate. The protein operates within terpene metabolism; oleoresin biosynthesis. Its pathway is secondary metabolite biosynthesis; terpenoid biosynthesis. In terms of biological role, monoterpene synthase (TPS) involved in the biosynthesis of monoterpene natural products included in conifer oleoresin secretions and volatile emissions; these compounds contribute to biotic and abiotic stress defense against herbivores and pathogens. Catalyzes the conversion of (2E)-geranyl diphosphate (GPP) to (+)-3-carene. The sequence is that of (+)-3-carene synthase 2, chloroplastic from Pinus banksiana (Jack pine).